Consider the following 136-residue polypeptide: Histone H3 (136 aa).

A disordered region spans residues 1–42 (MARTKQTARKSTGGKAPRKQLATKAAAKSAPATGGVKKPHRY). The residue at position 5 (K5) is an N6-methylated lysine. N6-acetyllysine; alternate is present on K10. Position 10 is an N6-methylated lysine; alternate (K10). S11 carries the post-translational modification Phosphoserine. An N6-acetyllysine mark is found at K15 and K24. A compositionally biased stretch (low complexity) spans 22–33 (ATKAAAKSAPAT). N6-methylated lysine occurs at positions 28, 37, and 80.

Belongs to the histone H3 family. The nucleosome is a histone octamer containing two molecules each of H2A, H2B, H3 and H4 assembled in one H3-H4 heterotetramer and two H2A-H2B heterodimers. The octamer wraps approximately 147 bp of DNA. In terms of processing, acetylation is generally linked to gene activation. Methylation at Lys-5 is linked to gene activation. Methylation at Lys-10 is linked to gene repression.

Its subcellular location is the nucleus. The protein resides in the chromosome. Core component of nucleosome. Nucleosomes wrap and compact DNA into chromatin, limiting DNA accessibility to the cellular machineries which require DNA as a template. Histones thereby play a central role in transcription regulation, DNA repair, DNA replication and chromosomal stability. DNA accessibility is regulated via a complex set of post-translational modifications of histones, also called histone code, and nucleosome remodeling. The protein is Histone H3 of Acropora formosa (Staghorn coral).